The primary structure comprises 672 residues: Acetoacetyl-CoA synthetase (672 aa).

This sequence belongs to the ATP-dependent AMP-binding enzyme family. Abundant in male subcutaneous white adipose tissue after weaning. In white adipose tissue, it is preferentially detected in mature adipocytes but not in preadipocytes. The expression in primary preadipocytes increases during the adipocyte differentiation. In brain, it is expressed in the midbrain, pons/medulla, cerebral cortex, hippocampus and cerebellum. The expression in the cerebellum is restricted primarily to glial cells, while in the cerebral cortex, it is restricted to neuronal cells.

Its subcellular location is the cytoplasm. It localises to the cytosol. It catalyses the reaction acetoacetate + ATP + CoA = acetoacetyl-CoA + AMP + diphosphate. Functionally, converts acetoacetate to acetoacetyl-CoA in the cytosol. Ketone body-utilizing enzyme, responsible for the synthesis of cholesterol and fatty acids. The chain is Acetoacetyl-CoA synthetase (Aacs) from Rattus norvegicus (Rat).